Consider the following 415-residue polypeptide: Casein kinase I isoform delta (415 aa).

The Protein kinase domain maps to 9–277 (YRLGRKIGSG…YLRQLFRNLF (269 aa)). ATP contacts are provided by residues 15–23 (IGSGSFGDI) and Lys38. Asp128 acts as the Proton acceptor in catalysis. Residues 278–364 (HRQGFSYDYV…TSPRPVSGME (87 aa)) are centrosomal localization signal (CLS). Over residues 301–315 (ADDAERERRDREERL) the composition is skewed to basic and acidic residues. Positions 301–415 (ADDAERERRD…SSGLQSVVHR (115 aa)) are disordered. The autoinhibitory stretch occupies residues 317-342 (HSRNPATRGLPSTASGRLRGTQEVAP). A phosphoserine mark is found at Ser328 and Ser331. The span at 347–358 (TPTSHTANTSPR) shows a compositional bias: polar residues. Phosphoserine is present on Ser370. Arg375 bears the Omega-N-methylarginine mark. Residues 380-400 (NISSSDLTGRQDTSRMSTSQI) show a composition bias toward polar residues. 5 positions are modified to phosphoserine: Ser382, Ser383, Ser384, Ser407, and Ser411.

Belongs to the protein kinase superfamily. CK1 Ser/Thr protein kinase family. Casein kinase I subfamily. Monomer. Component of the circadian core oscillator, which includes the CRY proteins, CLOCK, or NPAS2, ARTNL/BMAL1 or ARTNL2/BMAL2, CSNK1D and/or CSNK1E, TIMELESS and the PER proteins. Interacts with DNMT1 and MAP1A. Interacts directly with PER1 and PER2 which may lead to their degradation. Interacts with MAPT/TAU, SNAPIN, DBNDD2, AIB1/NCOA3 and ESR1. Interacts with AKAP9/AKAP450; this interaction promotes centrosomal subcellular location. Binds to tubulins in mitotic cells upon DNA damage. Interacts with GJA1. Interacts with DDX3X; this interaction enhances CSNK1D kinase activity in vitro, but it is unclear whether this interaction is physiologically relevant. Interacts with FAM83A, FAM83B, FAM83E and FAM83H (via DUF1669). Post-translationally, autophosphorylated on serine and threonine residues; this autophosphorylation represses activity. Reactivated by phosphatase-mediated dephosphorylation. May be dephosphorylated by PP1.

The protein resides in the cytoplasm. The protein localises to the nucleus. Its subcellular location is the cytoskeleton. It localises to the microtubule organizing center. It is found in the centrosome. The protein resides in the perinuclear region. The protein localises to the cell membrane. Its subcellular location is the spindle. It localises to the golgi apparatus. The catalysed reaction is L-seryl-[protein] + ATP = O-phospho-L-seryl-[protein] + ADP + H(+). It catalyses the reaction L-threonyl-[protein] + ATP = O-phospho-L-threonyl-[protein] + ADP + H(+). The enzyme catalyses L-seryl-[tau protein] + ATP = O-phospho-L-seryl-[tau protein] + ADP + H(+). It carries out the reaction L-threonyl-[tau protein] + ATP = O-phospho-L-threonyl-[tau protein] + ADP + H(+). Exhibits substrate-dependent heparin activation. Drug-mediated inhibition leads to a delay of the oscillations with the magnitude of this effect dependent upon the timing of drug administration. Inhibited by phosphorylation. Its function is as follows. Essential serine/threonine-protein kinase that regulates diverse cellular growth and survival processes including Wnt signaling, DNA repair and circadian rhythms. It can phosphorylate a large number of proteins. Casein kinases are operationally defined by their preferential utilization of acidic proteins such as caseins as substrates. Phosphorylates connexin-43/GJA1, MAP1A, SNAPIN, MAPT/TAU, TOP2A, DCK, HIF1A, EIF6, p53/TP53, DVL2, DVL3, ESR1, AIB1/NCOA3, DNMT1, PKD2, YAP1, PER1 and PER2. Central component of the circadian clock. In balance with PP1, determines the circadian period length through the regulation of the speed and rhythmicity of PER1 and PER2 phosphorylation. Controls PER1 and PER2 nuclear transport and degradation. YAP1 phosphorylation promotes its SCF(beta-TRCP) E3 ubiquitin ligase-mediated ubiquitination and subsequent degradation. DNMT1 phosphorylation reduces its DNA-binding activity. Phosphorylation of ESR1 and AIB1/NCOA3 stimulates their activity and coactivation. Phosphorylation of DVL2 and DVL3 regulates WNT3A signaling pathway that controls neurite outgrowth. Phosphorylates NEDD9/HEF1. EIF6 phosphorylation promotes its nuclear export. Triggers down-regulation of dopamine receptors in the forebrain. Activates DCK in vitro by phosphorylation. TOP2A phosphorylation favors DNA cleavable complex formation. May regulate the formation of the mitotic spindle apparatus in extravillous trophoblast. Modulates connexin-43/GJA1 gap junction assembly by phosphorylation. Probably involved in lymphocyte physiology. Regulates fast synaptic transmission mediated by glutamate. In Pongo abelii (Sumatran orangutan), this protein is Casein kinase I isoform delta (CSNK1D).